We begin with the raw amino-acid sequence, 292 residues long: Histamine N-methyltransferase (292 aa).

Glutamate 28 contributes to the substrate binding site. Residues glycine 60, glutamate 89, glutamine 94, serine 120, and isoleucine 142 each coordinate S-adenosyl-L-methionine. A substrate-binding site is contributed by asparagine 283.

This sequence belongs to the class I-like SAM-binding methyltransferase superfamily. HNMT family. Monomer.

It localises to the cytoplasm. The enzyme catalyses histamine + S-adenosyl-L-methionine = N(tau)-methylhistamine + S-adenosyl-L-homocysteine + H(+). Inactivates histamine by N-methylation. Plays an important role in degrading histamine and in regulating the airway response to histamine. The chain is Histamine N-methyltransferase (HNMT) from Pongo abelii (Sumatran orangutan).